Here is a 188-residue protein sequence, read N- to C-terminus: GTP cyclohydrolase 1 (188 aa).

3 residues coordinate Zn(2+): cysteine 75, histidine 78, and cysteine 146.

This sequence belongs to the GTP cyclohydrolase I family. As to quaternary structure, toroid-shaped homodecamer, composed of two pentamers of five dimers.

The enzyme catalyses GTP + H2O = 7,8-dihydroneopterin 3'-triphosphate + formate + H(+). The protein operates within cofactor biosynthesis; 7,8-dihydroneopterin triphosphate biosynthesis; 7,8-dihydroneopterin triphosphate from GTP: step 1/1. In Hahella chejuensis (strain KCTC 2396), this protein is GTP cyclohydrolase 1.